The chain runs to 176 residues: Epididymal-specific lipocalin-9 (176 aa).

Residues 1-15 (MALLLLSLGLSLIAA) form the signal peptide. Asn-68 and Asn-129 each carry an N-linked (GlcNAc...) asparagine glycan. A disulfide bond links Cys-83 and Cys-161.

The protein belongs to the calycin superfamily. Lipocalin family.

The protein localises to the secreted. The polypeptide is Epididymal-specific lipocalin-9 (Homo sapiens (Human)).